A 468-amino-acid polypeptide reads, in one-letter code: O-methyltransferase lcsG (468 aa).

Over residues 1-12 (MGDNVQSDTTAA) the composition is skewed to polar residues. A disordered region spans residues 1–29 (MGDNVQSDTTAAQAGITDAPTAPTSAPVS). S-adenosyl-L-methionine-binding positions include 298–299 (GG), D321, 348–349 (DF), and K363.

Belongs to the class I-like SAM-binding methyltransferase superfamily. Cation-independent O-methyltransferase family.

It participates in secondary metabolite biosynthesis. O-methyltransferase; part of the gene cluster that mediates the biosynthesis of the lipopeptide antibiotics leucinostatins that show extensive biological activities, including antimalarial, antiviral, antibacterial, antifungal, and antitumor activities, as well as phytotoxic. Leucinostatin A contains nine amino acid residues, including the unusual amino acid 4-methyl-L-proline (MePro), 2-amino-6-hydroxy-4-methyl-8-oxodecanoic acid (AHyMeOA), 3-hydroxyleucine (HyLeu), alpha-aminoisobutyric acid (AIB), beta-Ala, a 4-methylhex-2-enoic acid at the N-terminus as well as a N1,N1-dimethylpropane-1,2-diamine (DPD) at the C-terminus. The biosynthesis of leucinostatins is probably initiated with the assembly of 4-methylhex-2-enoic acid by a reducing PKS. Two reducing polyketide synthases, lcsB and lcsC, have been identified in the cluster and it is not clear which is the one that assembles 4-methylhex-2-enoic acid since both contain KS, AT, DH, cMT, ER, KR and ACP domains. The polyketide residue might be transferred to the NRPS lcsA, mediated by two additional enzymes, the acyl-CoA ligase lcsD and the thioesterase lcsE. The linear polyketide carboxylic acid, which is released from PKS, is converted to a CoA thioester by lcsD, and then lcsE hydrolyzes the thiol bond and shuttles the polyketide intermediate to lcsA. The C domain of the first module catalyzed the condensation of 4-methylhex-2-enoic acid and MePro carried by domain A1, followed by successive condensations of nine amino acids to trigger the elongation of the linear peptide. A5 and A6 domains of lcsA are proposed to incorporate leucine, A2 AHyMeOA, and A3 incorporates HyLeu. A4, A7 and A8 incorporate AIB. The AHyMeOA in leucinostatin A activated by the A2 might be produced by the second PKS (lcsB or lcsC) present within the cluster. The MePro is probably produced via leucine cyclization and may originate from a separate pathway, independent of the cluster. Another nonproteinogenic amino acid, beta-Ala, could be produced by an aspartic acid decarboxylase also localized outside of the cluster. Two candidates are VFPBJ_01400 and VFPBJ_10476. The final peptide scaffold may be released by the NAD(P)H-dependent thioester reductase (TE) at the C-terminal region of lcsA. Transamination of the lcsA product by the transaminase lcsP may produce DPD at the C-terminus. Further hydroxylation steps performed alternatively by the cytochrome P450 monooxygenases lcsI, lcsK and lcsN then yield the non-methylated leucinostatins precursor. It is also possible that leucines can be hydroxylated prior to their incorporation into the peptide. Varying extents of methylation then lead to the formation of leucinostatins A and B. This Purpureocillium lilacinum (Paecilomyces lilacinus) protein is O-methyltransferase lcsG.